Here is a 193-residue protein sequence, read N- to C-terminus: Probable nicotinate-nucleotide adenylyltransferase (193 aa).

Belongs to the NadD family.

It carries out the reaction nicotinate beta-D-ribonucleotide + ATP + H(+) = deamido-NAD(+) + diphosphate. It functions in the pathway cofactor biosynthesis; NAD(+) biosynthesis; deamido-NAD(+) from nicotinate D-ribonucleotide: step 1/1. Its function is as follows. Catalyzes the reversible adenylation of nicotinate mononucleotide (NaMN) to nicotinic acid adenine dinucleotide (NaAD). In Flavobacterium johnsoniae (strain ATCC 17061 / DSM 2064 / JCM 8514 / BCRC 14874 / CCUG 350202 / NBRC 14942 / NCIMB 11054 / UW101) (Cytophaga johnsonae), this protein is Probable nicotinate-nucleotide adenylyltransferase.